The following is a 448-amino-acid chain: Ribosomal protein uS12 methylthiotransferase RimO (448 aa).

The region spanning 6 to 116 (PKVGIVSLGC…VVEAVHAAIP (111 aa)) is the MTTase N-terminal domain. The [4Fe-4S] cluster site is built by Cys-15, Cys-51, Cys-80, Cys-147, Cys-151, and Cys-154. Residues 133–371 (LTPHHYAYLK…EAARQIADER (239 aa)) enclose the Radical SAM core domain. A TRAM domain is found at 373–439 (AAKEGTRIEV…DYDLWGDVVE (67 aa)).

It belongs to the methylthiotransferase family. RimO subfamily. [4Fe-4S] cluster serves as cofactor.

It is found in the cytoplasm. The enzyme catalyses L-aspartate(89)-[ribosomal protein uS12]-hydrogen + (sulfur carrier)-SH + AH2 + 2 S-adenosyl-L-methionine = 3-methylsulfanyl-L-aspartate(89)-[ribosomal protein uS12]-hydrogen + (sulfur carrier)-H + 5'-deoxyadenosine + L-methionine + A + S-adenosyl-L-homocysteine + 2 H(+). Its function is as follows. Catalyzes the methylthiolation of an aspartic acid residue of ribosomal protein uS12. This Paramagnetospirillum magneticum (strain ATCC 700264 / AMB-1) (Magnetospirillum magneticum) protein is Ribosomal protein uS12 methylthiotransferase RimO.